The sequence spans 403 residues: Aspartic endopeptidase PEP1 (403 aa).

Positions 1 to 20 are cleaved as a signal peptide; sequence MVQISQIGAVLAVCSTLTVA. A propeptide spans 21–67 (activation peptide); sequence APTKGKARFNVPQVAVPMKAVHHPAVAYARALHKFGMKVPKAVSDAA. The Peptidase A1 domain occupies 82–400; that stretch reads YVTQVTVGQG…DTEGPRIGFA (319 aa). Residue D98 is part of the active site. N-linked (GlcNAc...) asparagine glycans are attached at residues N159 and N270. D293 is an active-site residue. A disulfide bond links C329 and C361.

Belongs to the peptidase A1 family.

It localises to the secreted. The catalysed reaction is Hydrolysis of proteins with broad specificity. Generally favors hydrophobic residues in P1 and P1', but also accepts Lys in P1, which leads to activation of trypsinogen. Does not clot milk.. Secreted aspartic endopeptidase that allows assimilation of proteinaceous substrates. Can catalyze hydrolysis of the major structural proteins of basement membrane, elastin, collagen, and laminin. Thought to play a significant role in virulence. In terms of biological role, can catalyze hydrolysis of the major structural proteins of basement membrane, elastin, collagen, and laminin. Thought to play a significant role in virulence. This Trichophyton verrucosum (strain HKI 0517) protein is Aspartic endopeptidase PEP1 (PEP1).